The primary structure comprises 309 residues: Porphobilinogen deaminase (309 aa).

The residue at position 244 (Cys-244) is an S-(dipyrrolylmethanemethyl)cysteine.

The protein belongs to the HMBS family. As to quaternary structure, monomer. It depends on dipyrromethane as a cofactor.

It carries out the reaction 4 porphobilinogen + H2O = hydroxymethylbilane + 4 NH4(+). It functions in the pathway porphyrin-containing compound metabolism; protoporphyrin-IX biosynthesis; coproporphyrinogen-III from 5-aminolevulinate: step 2/4. Tetrapolymerization of the monopyrrole PBG into the hydroxymethylbilane pre-uroporphyrinogen in several discrete steps. The sequence is that of Porphobilinogen deaminase from Listeria monocytogenes serotype 4a (strain HCC23).